Reading from the N-terminus, the 237-residue chain is Lectin alpha chain (237 aa).

Positions 8 and 10 each coordinate Mn(2+). Residues Asp-10, Tyr-12, Asn-14, and Asp-19 each coordinate Ca(2+). Residue Tyr-12 participates in a carbohydrate binding. The Mn(2+) site is built by Asp-19, His-24, and Ser-34. A carbohydrate is bound at residue Leu-99 to Tyr-100. Asp-208 lines the Ca(2+) pocket. Position 228 (Arg-228) interacts with a carbohydrate.

The protein belongs to the leguminous lectin family. In terms of assembly, equilibrium between homodimer and homotetramer. Oligomerization is pH-dependent with homotetramers forming at pH 6.5 and above. In terms of processing, the beta and gamma chains are produced by partial proteolytic processing of the lectin alpha chain by an asparaginyl endopeptidase. Mixture of 60% alpha lectin and 40% of its beta and gamma proteolytic fragments. In terms of tissue distribution, seed.

It localises to the vacuole. The protein resides in the aleurone grain. Its function is as follows. D-mannose/D-glucose-binding lectin. Induces histamine release in mast cells from hamster and rat. Induces lymphocyte proliferation and IFNG production. In Macropsychanthus bicolor (Dioclea rostrata), this protein is Lectin alpha chain.